An 895-amino-acid polypeptide reads, in one-letter code: WD repeat-containing protein 36 (895 aa).

WD repeat units follow at residues 30–63 (VVRF…LVAV), 72–101 (CCMA…IVHT), 110–143 (HFLQ…LQLT), 152–186 (SAIL…LLYT), 193–230 (GVTA…MKFR), 237–272 (TSIS…INQM), 277–320 (STAI…RFRM), and 327–361 (TNIR…FNKS). Serine 382 and serine 399 each carry phosphoserine. WD repeat units follow at residues 389–428 (TKFA…GAYF), 441–475 (ATAV…HRGS), 486–522 (VRGV…HSVS), 527–562 (PNIM…VREF), 564–605 (GHQG…DCFL), and 607–645 (DSAP…SVVS).

In terms of assembly, part of the small subunit (SSU) processome, composed of more than 70 proteins and the RNA chaperone small nucleolar RNA (snoRNA) U3. Expressed in heart, placenta, liver, skeletal muscle, kidney and pancreas. In ocular tissues, strong expression in iris, sclera, ciliary muscle, ciliary body, retina and optic nerve.

Its subcellular location is the nucleus. The protein localises to the nucleolus. Part of the small subunit (SSU) processome, first precursor of the small eukaryotic ribosomal subunit. During the assembly of the SSU processome in the nucleolus, many ribosome biogenesis factors, an RNA chaperone and ribosomal proteins associate with the nascent pre-rRNA and work in concert to generate RNA folding, modifications, rearrangements and cleavage as well as targeted degradation of pre-ribosomal RNA by the RNA exosome. Involved in the nucleolar processing of SSU 18S rRNA. Involved in T-cell activation and highly coregulated with IL2. The protein is WD repeat-containing protein 36 of Homo sapiens (Human).